The sequence spans 364 residues: Fructose-bisphosphate aldolase B (364 aa).

Residues Arg-56 and Lys-147 each coordinate substrate. The active-site Proton acceptor is Glu-188. The Schiff-base intermediate with dihydroxyacetone-P role is filled by Lys-230.

Belongs to the class I fructose-bisphosphate aldolase family. Homotetramer.

It localises to the cytoplasm. The protein resides in the cytoskeleton. The protein localises to the microtubule organizing center. It is found in the centrosome. Its subcellular location is the centriolar satellite. It carries out the reaction beta-D-fructose 1,6-bisphosphate = D-glyceraldehyde 3-phosphate + dihydroxyacetone phosphate. It participates in carbohydrate degradation; glycolysis; D-glyceraldehyde 3-phosphate and glycerone phosphate from D-glucose: step 4/4. This chain is Fructose-bisphosphate aldolase B (ALDOB), found in Gallus gallus (Chicken).